Consider the following 158-residue polypeptide: Cyclic pyranopterin monophosphate synthase (158 aa).

Residues 75 to 77 (LCH) and 113 to 114 (ME) contribute to the substrate site. The active site involves Asp128.

This sequence belongs to the MoaC family. In terms of assembly, homohexamer; trimer of dimers.

It carries out the reaction (8S)-3',8-cyclo-7,8-dihydroguanosine 5'-triphosphate = cyclic pyranopterin phosphate + diphosphate. It participates in cofactor biosynthesis; molybdopterin biosynthesis. Its function is as follows. Catalyzes the conversion of (8S)-3',8-cyclo-7,8-dihydroguanosine 5'-triphosphate to cyclic pyranopterin monophosphate (cPMP). This is Cyclic pyranopterin monophosphate synthase from Polynucleobacter asymbioticus (strain DSM 18221 / CIP 109841 / QLW-P1DMWA-1) (Polynucleobacter necessarius subsp. asymbioticus).